The primary structure comprises 1257 residues: Liprin-alpha-2 (1257 aa).

Residues 1–29 (MMCEVMPTINEDTPMSQRGSQSSGSDSDS) are disordered. Residues 16-26 (SQRGSQSSGSD) are compositionally biased toward low complexity. Coiled-coil stretches lie at residues 29–154 (SHFE…SLRM) and 185–235 (KALD…SSEG). At serine 236 the chain carries Phosphoserine. The residue at position 237 (threonine 237) is a Phosphothreonine. Serine 239 is subject to Phosphoserine. Coiled coils occupy residues 264–541 (TDDT…SLIE) and 643–695 (HSDA…GLNL). The interval 439 to 463 (GQLEEKNQELQRARQREKMNEEHNK) is disordered. Residues serine 687 and serine 689 each carry the phosphoserine modification. The span at 709-725 (TASSLASSSPPSGHSTP) shows a compositional bias: low complexity. Disordered regions lie at residues 709–738 (TASS…EMDR) and 759–834 (EEDG…KSSI). Polar residues predominate over residues 787 to 802 (TLPSSYHNDARSSLSA). A phosphoserine mark is found at serine 817 and serine 820. 3 SAM domains span residues 898–964 (WDGP…MVSL), 1020–1084 (NHEW…LKRL), and 1108–1177 (WSND…LLAL). A coiled-coil region spans residues 1081–1107 (LKRLNYDRKELERRREASQHEIKDVLV).

The protein belongs to the liprin family. Liprin-alpha subfamily. As to quaternary structure, forms homodimers and heterodimers with liprins-alpha and liprins-beta. Interacts with the second PTPase domain of PTPRD, PTPRF and PTPRS. Interacts with KIF1A; the interaction decreases in presence of calcium.

It localises to the cytoplasm. It is found in the cell surface. The protein resides in the cell projection. Its subcellular location is the dendritic spine. In terms of biological role, alters PTPRF cellular localization and induces PTPRF clustering. May regulate the disassembly of focal adhesions. May localize receptor-like tyrosine phosphatases type 2A at specific sites on the plasma membrane, possibly regulating their interaction with the extracellular environment and their association with substrates. In neuronal cells, is a scaffolding protein in the dendritic spines which acts as immobile postsynaptic post able to recruit KIF1A-driven dense core vesicles to dendritic spines. This chain is Liprin-alpha-2 (Ppfia2), found in Mus musculus (Mouse).